Reading from the N-terminus, the 1337-residue chain is GTPase activating protein homolog 3 (1337 aa).

The F-BAR domain occupies 14-264 (PESFADLWDG…LINSINNEDE (251 aa)). Disordered regions lie at residues 279–328 (PKPF…LPIF) and 345–392 (ITNS…RFST). Residues 293 to 302 (TPPPPPPPQI) show a composition bias toward pro residues. Over residues 345 to 358 (ITNSLSLSSDSLQT) the composition is skewed to polar residues. The Rho-GAP domain maps to 422–611 (CKIEDIMVAQ…NIIEHFKPLQ (190 aa)). Disordered stretches follow at residues 612–689 (VNDS…TTNT), 733–781 (VNNN…HTVA), and 794–821 (ITTP…SPSE). 3 stretches are compositionally biased toward low complexity: residues 621–637 (SSSS…SIES), 645–687 (SSTN…SSTT), and 734–772 (NNNN…QQVS). Positions 830 to 859 (YLEDQERCKQRIDELHTQVNELYSDITTIE) form a coiled coil. 2 disordered regions span residues 1041-1102 (SDPD…INNS) and 1114-1166 (KSAL…AHAI). The segment covering 1047-1063 (SPPTISNTTNRLLNTSG) has biased composition (polar residues). 2 stretches are compositionally biased toward low complexity: residues 1064-1102 (STDF…INNS) and 1114-1159 (KSAL…TTTN). Residues 1189-1219 (LEINNKLHSQLTEELKKKQQQYKQLIFDIID) adopt a coiled-coil conformation.

It is found in the cytoplasm. The protein localises to the contractile vacuole. Functionally, rho GTPase-activating protein involved in the signal transduction pathway. The chain is GTPase activating protein homolog 3 (mgp3) from Dictyostelium discoideum (Social amoeba).